The chain runs to 205 residues: ATP synthase subunit b (205 aa).

The signal sequence occupies residues 1–27; it reads MKLNKKHLVAILSVLSLSIIVVPLLTS. Cys28 carries N-palmitoyl cysteine lipidation. Cys28 carries the S-diacylglycerol cysteine lipid modification. The helical transmembrane segment at 48–68 threads the bilayer; that stretch reads VWVFIAQVIAMCVVFSLVLWL.

Belongs to the ATPase B chain family. F-type ATPases have 2 components, F(1) - the catalytic core - and F(0) - the membrane proton channel. F(1) has five subunits: alpha(3), beta(3), gamma(1), delta(1), epsilon(1). F(0) has three main subunits: a(1), b(2) and c(10-14). The alpha and beta chains form an alternating ring which encloses part of the gamma chain. F(1) is attached to F(0) by a central stalk formed by the gamma and epsilon chains, while a peripheral stalk is formed by the delta and b chains.

It localises to the cell membrane. In terms of biological role, f(1)F(0) ATP synthase produces ATP from ADP in the presence of a proton or sodium gradient. F-type ATPases consist of two structural domains, F(1) containing the extramembraneous catalytic core and F(0) containing the membrane proton channel, linked together by a central stalk and a peripheral stalk. During catalysis, ATP synthesis in the catalytic domain of F(1) is coupled via a rotary mechanism of the central stalk subunits to proton translocation. Component of the F(0) channel, it forms part of the peripheral stalk, linking F(1) to F(0). This chain is ATP synthase subunit b, found in Ureaplasma parvum serovar 3 (strain ATCC 27815 / 27 / NCTC 11736).